The primary structure comprises 218 residues: Small ribosomal subunit protein uS3c (218 aa).

Residues 47–118 (VQKHMRISSG…RLNITITRIA (72 aa)) form the KH type-2 domain.

It belongs to the universal ribosomal protein uS3 family. As to quaternary structure, part of the 30S ribosomal subunit.

It is found in the plastid. It localises to the chloroplast. This chain is Small ribosomal subunit protein uS3c (rps3), found in Amborella trichopoda.